Reading from the N-terminus, the 611-residue chain is POU domain, class 6, transcription factor 1 (611 aa).

Residues 62–93 (ASQAAGEAGPDNLGSSAEATVKSPPGIPPSPA) form a disordered region. The region spanning 449-523 (EDGINLEEIR…VLEKWLNEAE (75 aa)) is the POU-specific domain. Positions 544–603 (KRKRRTSFTPQAIEALNAYFEKNPLPTGQEITEIAKELNYDREVVRVWFCNRRQTLKNTS) form a DNA-binding region, homeobox.

Belongs to the POU transcription factor family. Class-6 subfamily. In the embryo, expressed exclusively in the developing brain, whereas in the adult its expression is restricted to brain, heart, skeletal muscle and lung. In the brain, the highest expression levels are found in specific cell layers of the cortex, the olfactory bulb, the hippocampus and the cerebellum.

Its subcellular location is the nucleus. Its function is as follows. Transcription factor that binds preferentially to a variant of the octamer motif (5'-ATGATAAT-3'). In Homo sapiens (Human), this protein is POU domain, class 6, transcription factor 1 (POU6F1).